Consider the following 58-residue polypeptide: Small ribosomal subunit protein bS21 (58 aa).

The segment covering 32-42 (IRKREHYEKPS) has biased composition (basic and acidic residues). A disordered region spans residues 32 to 58 (IRKREHYEKPSVKRKKKSEAARKRKFK). Basic residues predominate over residues 43–58 (VKRKKKSEAARKRKFK).

Belongs to the bacterial ribosomal protein bS21 family.

This is Small ribosomal subunit protein bS21 from Lachnoclostridium phytofermentans (strain ATCC 700394 / DSM 18823 / ISDg) (Clostridium phytofermentans).